The sequence spans 475 residues: Ribulose bisphosphate carboxylase large chain (475 aa).

Residues 1 to 2 (MS) constitute a propeptide that is removed on maturation. An N-acetylproline modification is found at Pro3. Lys14 bears the N6,N6,N6-trimethyllysine mark. Substrate is bound by residues Asn123 and Thr173. Residue Lys175 is the Proton acceptor of the active site. Lys177 contacts substrate. Mg(2+) is bound by residues Lys201, Asp203, and Glu204. The residue at position 201 (Lys201) is an N6-carboxylysine. The active-site Proton acceptor is the His294. The substrate site is built by Arg295, His327, and Ser379.

The protein belongs to the RuBisCO large chain family. Type I subfamily. As to quaternary structure, heterohexadecamer of 8 large chains and 8 small chains; disulfide-linked. The disulfide link is formed within the large subunit homodimers. Requires Mg(2+) as cofactor. Post-translationally, the disulfide bond which can form in the large chain dimeric partners within the hexadecamer appears to be associated with oxidative stress and protein turnover.

Its subcellular location is the plastid. It is found in the chloroplast. The catalysed reaction is 2 (2R)-3-phosphoglycerate + 2 H(+) = D-ribulose 1,5-bisphosphate + CO2 + H2O. The enzyme catalyses D-ribulose 1,5-bisphosphate + O2 = 2-phosphoglycolate + (2R)-3-phosphoglycerate + 2 H(+). Functionally, ruBisCO catalyzes two reactions: the carboxylation of D-ribulose 1,5-bisphosphate, the primary event in carbon dioxide fixation, as well as the oxidative fragmentation of the pentose substrate in the photorespiration process. Both reactions occur simultaneously and in competition at the same active site. The protein is Ribulose bisphosphate carboxylase large chain of Nandina domestica (Heavenly bamboo).